A 150-amino-acid polypeptide reads, in one-letter code: Dihydroneopterin triphosphate diphosphatase (150 aa).

A Nudix hydrolase domain is found at 5–146 (VYKRPVSILV…SNRQAIEQFV (142 aa)). Substrate contacts are provided by K7, R29, and T40. The short motif at 41-62 (GSVEEGETAPQAAMREVKEEVT) is the Nudix box element. The Mg(2+) site is built by E56 and E60. 81–84 (FEIF) contributes to the substrate binding site. E117 is a Mg(2+) binding site. Residue S135 participates in substrate binding.

It belongs to the Nudix hydrolase family. Mg(2+) is required as a cofactor.

It catalyses the reaction 7,8-dihydroneopterin 3'-triphosphate + H2O = 7,8-dihydroneopterin 3'-phosphate + diphosphate + H(+). Catalyzes the hydrolysis of dihydroneopterin triphosphate to dihydroneopterin monophosphate and pyrophosphate. Required for efficient folate biosynthesis. Can also hydrolyze nucleoside triphosphates with a preference for dATP. The polypeptide is Dihydroneopterin triphosphate diphosphatase (nudB) (Escherichia coli O157:H7).